The following is a 475-amino-acid chain: Ribulose bisphosphate carboxylase large chain (475 aa).

Residues 1 to 2 (MS) constitute a propeptide that is removed on maturation. Position 3 is an N-acetylproline (P3). Residue K14 is modified to N6,N6,N6-trimethyllysine. N123 and T173 together coordinate substrate. K175 acts as the Proton acceptor in catalysis. K177 provides a ligand contact to substrate. 3 residues coordinate Mg(2+): K201, D203, and E204. Residue K201 is modified to N6-carboxylysine. H294 functions as the Proton acceptor in the catalytic mechanism. Substrate-binding residues include H327 and S379.

Belongs to the RuBisCO large chain family. Type I subfamily. In terms of assembly, heterohexadecamer of 8 large chains and 8 small chains; disulfide-linked. The disulfide link is formed within the large subunit homodimers. It depends on Mg(2+) as a cofactor. The disulfide bond which can form in the large chain dimeric partners within the hexadecamer appears to be associated with oxidative stress and protein turnover.

The protein localises to the plastid. Its subcellular location is the chloroplast. The enzyme catalyses 2 (2R)-3-phosphoglycerate + 2 H(+) = D-ribulose 1,5-bisphosphate + CO2 + H2O. The catalysed reaction is D-ribulose 1,5-bisphosphate + O2 = 2-phosphoglycolate + (2R)-3-phosphoglycerate + 2 H(+). RuBisCO catalyzes two reactions: the carboxylation of D-ribulose 1,5-bisphosphate, the primary event in carbon dioxide fixation, as well as the oxidative fragmentation of the pentose substrate in the photorespiration process. Both reactions occur simultaneously and in competition at the same active site. In Amaranthus hypochondriacus (Prince-of-Wales feather), this protein is Ribulose bisphosphate carboxylase large chain.